Reading from the N-terminus, the 440-residue chain is Streptokinase A (440 aa).

A signal peptide spans 1 to 26 (MKNYLSIGVIALLFALTFGTVKSVQA).

In terms of biological role, this protein is not a protease, but it activates plasminogen by complexing with it. As a potential virulence factor, it is thought to prevent the formation of effective fibrin barriers around the site of infection, thereby contributing to the invasiveness of the cells. This is Streptokinase A (ska) from Streptococcus pyogenes serotype M1.